The primary structure comprises 119 residues: DNA-directed RNA polymerase subunit omega (119 aa).

This sequence belongs to the RNA polymerase subunit omega family. The RNAP catalytic core consists of 2 alpha, 1 beta, 1 beta' and 1 omega subunit. When a sigma factor is associated with the core the holoenzyme is formed, which can initiate transcription.

The enzyme catalyses RNA(n) + a ribonucleoside 5'-triphosphate = RNA(n+1) + diphosphate. Its function is as follows. Promotes RNA polymerase assembly. Latches the N- and C-terminal regions of the beta' subunit thereby facilitating its interaction with the beta and alpha subunits. In Caulobacter sp. (strain K31), this protein is DNA-directed RNA polymerase subunit omega.